A 408-amino-acid chain; its full sequence is Peptidase T (408 aa).

A Zn(2+)-binding site is contributed by histidine 78. Aspartate 80 is a catalytic residue. Aspartate 141 lines the Zn(2+) pocket. The Proton acceptor role is filled by glutamate 175. 3 residues coordinate Zn(2+): glutamate 176, aspartate 198, and histidine 380.

Belongs to the peptidase M20B family. The cofactor is Zn(2+).

It localises to the cytoplasm. It catalyses the reaction Release of the N-terminal residue from a tripeptide.. Cleaves the N-terminal amino acid of tripeptides. The polypeptide is Peptidase T (Clostridium botulinum (strain Kyoto / Type A2)).